We begin with the raw amino-acid sequence, 312 residues long: Glyoxylate/hydroxypyruvate reductase A (312 aa).

Arginine 227 is an active-site residue. Histidine 275 functions as the Proton donor in the catalytic mechanism.

Belongs to the D-isomer specific 2-hydroxyacid dehydrogenase family. GhrA subfamily.

The protein resides in the cytoplasm. The catalysed reaction is glycolate + NADP(+) = glyoxylate + NADPH + H(+). It carries out the reaction (R)-glycerate + NAD(+) = 3-hydroxypyruvate + NADH + H(+). The enzyme catalyses (R)-glycerate + NADP(+) = 3-hydroxypyruvate + NADPH + H(+). Functionally, catalyzes the NADPH-dependent reduction of glyoxylate and hydroxypyruvate into glycolate and glycerate, respectively. This Salmonella choleraesuis (strain SC-B67) protein is Glyoxylate/hydroxypyruvate reductase A.